The primary structure comprises 1423 residues: Fructan beta-fructosidase (1423 aa).

The first 39 residues, 1–39 (MEEETVCKNWFMRKSGKSWIFGCAVFFVLGLATALPVAA), serve as a signal peptide directing secretion. Residues 44–161 (QTTAADTAVT…TNLEDMSHDT (118 aa)) are disordered. Residues 69–126 (AVTETTQSEGTASKQLTTPAVADQTTEPTDNEPISSSDGASSPYQVTDTTEPQQTLTP) are compositionally biased toward polar residues. Residues 455 to 458 (WAND), Q474, 513 to 514 (FS), 581 to 582 (RD), and D783 each bind substrate. The active site involves D458. Residues 867-871 (ASVEV) form an involved in binding of sugars with beta-(2,6) linkages or binding of molecular weight fructans region. The region spanning 924 to 1002 (PVAMNTTTAK…SKENPSLSKT (79 aa)) is the BIG2 domain. The span at 1368–1385 (DVNSVQQTEPSVMSSSPK) shows a compositional bias: polar residues. The tract at residues 1368 to 1394 (DVNSVQQTEPSVMSSSPKATLPDTGDH) is disordered. Residues 1388-1392 (LPDTG) carry the LPXTG sorting signal motif. T1391 is modified (pentaglycyl murein peptidoglycan amidated threonine). Residues 1392–1423 (GDHKTDLSQLGVLAMIGSFLVEIAGYFKKRKD) constitute a propeptide, removed by sortase.

It belongs to the glycosyl hydrolase 32 family.

The protein localises to the secreted. Its subcellular location is the cell wall. The catalysed reaction is Hydrolysis of terminal, non-reducing (2-&gt;1)- and (2-&gt;6)-linked beta-D-fructofuranose residues in fructans.. In terms of biological role, this protein is a fructanase enzyme which degrades levans and inulins to fructose and also cleaves sucrose into glucose and fructose and can therefore function as an extracellular invertase. This chain is Fructan beta-fructosidase (fruA), found in Streptococcus mutans serotype c (strain ATCC 700610 / UA159).